The sequence spans 513 residues: RNA-binding protein FUS (513 aa).

Over residues 1–14 (MASNDYTQQATQSY) the composition is skewed to polar residues. Residues 1 to 273 (MASNDYTQQA…SEQDNSDNNT (273 aa)) form a disordered region. 3 stretches are compositionally biased toward low complexity: residues 20 to 36 (QPGQ…YGQQ), 43 to 63 (QSTD…GQTQ), and 84 to 124 (SSQS…SGYG). The segment covering 125 to 139 (QPQGGGYGQQSGYGG) has biased composition (gly residues). Residues 140 to 164 (QQQSYGQQQSYNPPQGYGQQSQYNS) are compositionally biased toward low complexity. Gly residues-rich tracts occupy residues 165–176 (SGGGGGGGGGSY) and 185–219 (SGGG…GGGY). An asymmetric dimethylarginine; alternate mark is found at R211 and R213. 2 positions are modified to omega-N-methylarginine; alternate: R211 and R213. Asymmetric dimethylarginine occurs at positions 229, 231, 235, 238, and 246. Over residues 231–246 (RGGGRGGRGGMGGSDR) the composition is skewed to gly residues. Position 264 is a phosphoserine (S264). The RRM domain occupies 272 to 358 (NTIFVQGLGE…NPIKVSFATR (87 aa)). T273 is subject to Phosphothreonine. K321 is covalently cross-linked (Glycyl lysine isopeptide (Lys-Gly) (interchain with G-Cter in SUMO2)). The residue at position 327 (S327) is a Phosphoserine. Disordered regions lie at residues 362 to 411 (FNRG…QRAG) and 431 to 513 (CNQC…ERPY). An asymmetric dimethylarginine mark is found at R364, R370, R373, R375, and R381. Gly residues predominate over residues 364–408 (RGGGNGRGGRGRGGPMGRGGYGGGGSGGGGRGGFPSGGGGGGGQQ). R394 bears the Asymmetric dimethylarginine; alternate mark. An Omega-N-methylarginine; alternate modification is found at R394. The RanBP2-type zinc finger occupies 409 to 440 (RAGDWKCPNPTCENMNFSWRNECNQCKAPKPD). The span at 441 to 455 (GPGGGPGGSHMGGNY) shows a compositional bias: gly residues. The span at 456–480 (GDDRRGGRGGYDRGGYRGRGGDRGG) shows a compositional bias: basic and acidic residues. Residues R460, R463, R468, R472, R474, R478, R482, and R485 each carry the asymmetric dimethylarginine modification. The segment covering 481–495 (FRGGRGGGDRGGFGP) has biased composition (gly residues). R490 is subject to Asymmetric dimethylarginine; alternate. Omega-N-methylarginine; alternate is present on R490. Residues 498–513 (MDSRGEHRQDRRERPY) are compositionally biased toward basic and acidic residues.

The protein belongs to the RRM TET family. As to quaternary structure, self-oligomerizes (via N-terminal region). Oligomerization is essential for chromatin binding. Component of nuclear riboprotein complexes. Interacts with ILF3, TDRD3 and SF1. Interacts through its C-terminus with SFRS13A. Interacts with OTUB1 and SARNP. Interacts with LRSAM1. Interacts with SAFB1 in a DNA-dependent manner; this interaction tethers FUS to chromatin. Interacts with MATR3. Interacts with SNRNP70 and POLR2A; these interactions couple RNA transcription and splicing. Interacts (through its RNA-binding domain) with RALY (through its RNA-binding domain); both are components of the same RNPs. In terms of processing, phosphorylated in its N-terminal serine residues upon induced DNA damage. ATM and DNA-PK are able to phosphorylate FUS N-terminal region.

The protein localises to the nucleus. DNA/RNA-binding protein that plays a role in various cellular processes such as transcription regulation, RNA splicing, RNA transport, DNA repair and damage response. Binds to ssRNA containing the consensus sequence 5'-AGGUAA-3'. Binds to nascent pre-mRNAs and acts as a molecular mediator between RNA polymerase II and U1 small nuclear ribonucleoprotein thereby coupling transcription and splicing. Also binds its own pre-mRNA and autoregulates its expression; this autoregulation mechanism is mediated by non-sense-mediated decay. Plays a role in DNA repair mechanisms by promoting D-loop formation and homologous recombination during DNA double-strand break repair. In neuronal cells, plays crucial roles in dendritic spine formation and stability, RNA transport, mRNA stability and synaptic homeostasis. In Bos taurus (Bovine), this protein is RNA-binding protein FUS (FUS).